The chain runs to 2543 residues: Highly reducing polyketide synthase PKS2 (2543 aa).

Residues 4 to 425 (EPRIAVIGLS…GSNSAILLEG (422 aa)) form the Ketosynthase family 3 (KS3) domain. Active-site for beta-ketoacyl synthase activity residues include Cys-174, His-309, and His-349. Residues 573-902 (VFTGQGAQHA…TYLPTLFRGT (330 aa)) are malonyl-CoA:ACP transacylase (MAT) domain. Ser-662 acts as the For malonyltransferase activity in catalysis. Residues 969 to 1101 (HPLLGRKISP…GQIEAEMTDM (133 aa)) form an N-terminal hotdog fold region. Positions 969-1281 (HPLLGRKISP…FRNIGSAEEV (313 aa)) constitute a PKS/mFAS DH domain. Residues 969–1283 (HPLLGRKISP…NIGSAEEVID (315 aa)) form a dehydratase (DH) domain region. His-1001 serves as the catalytic Proton acceptor; for dehydratase activity. Positions 1119–1281 (TGLKEHDINA…FRNIGSAEEV (163 aa)) are C-terminal hotdog fold. Asp-1188 acts as the Proton donor; for dehydratase activity in catalysis. A methyltransferase (CMet) domain region spans residues 1438 to 1631 (SKVLGYLTEY…LPSRYGTDKP (194 aa)). Residues 1847–2159 (GSPDTIYFQR…SGEHMGKMVI (313 aa)) are enoylreductase (ER) domain. A ketoreductase (KR) domain region spans residues 2184–2359 (ATYLVAGGTR…YTVSIALPVV (176 aa)). In terms of domain architecture, Carrier spans 2463 to 2540 (DPLIGLTEAM…ALATEILSQR (78 aa)). Ser-2500 bears the O-(pantetheine 4'-phosphoryl)serine mark.

It functions in the pathway secondary metabolite biosynthesis. Functionally, highly reducing polyketide synthase; part of the gene cluster that mediates the biosynthesis of phomenoic acid, a long chain aliphatic carboxylic acid that does not appear to be essential for pathogenicity but may play a role in allowing to outcompete other fungi in the environmental niche via its antifungal properties. The polyketide synthase produces the long methylated aliphatic carboxylic acid chain of phomenoic acid. The cluster-specific cytochrome P450 monooxygenase may then hydroxylate the methyl group of carbon 31. The putative dehydrogenase YogA, which has no obvious role in phomenoic acid biosynthesis, may further modify phomenoic acid to produce a compound not identified yet. This chain is Highly reducing polyketide synthase PKS2, found in Leptosphaeria maculans (strain JN3 / isolate v23.1.3 / race Av1-4-5-6-7-8) (Blackleg fungus).